Reading from the N-terminus, the 213-residue chain is Immunoglobulin lambda-like polypeptide 1 (213 aa).

Residues 1–37 form the signal peptide; it reads MRPGTGQGGLEAPGEPGPNLRQRWPLLLLGLAVVTHG. Positions 97-108 are j region; the sequence is VFGSGTQLTVLS. A c region region spans residues 109 to 213; the sequence is QPKATPSVTL…EKTVAPAECS (105 aa). One can recognise an Ig-like C1-type domain in the interval 114-208; sequence PSVTLFPPSS…EGSTVEKTVA (95 aa). A disulfide bond links cysteine 135 and cysteine 194.

As to quaternary structure, associates non-covalently with VPREB1. Interacts with SYNV1/HRD1 (via N-terminus); this interaction leads to increased IGLL1 ubiquitination and degradation in pre-B cells, possibly through a lysosomal, not proteasomal, pathway. In terms of tissue distribution, expressed only in pre-B-cells and a special B-cell line (which is surface Ig negative).

It localises to the endoplasmic reticulum. The protein localises to the secreted. Its function is as follows. Critical for B-cell development. The chain is Immunoglobulin lambda-like polypeptide 1 (IGLL1) from Homo sapiens (Human).